The chain runs to 607 residues: Aspartate--tRNA(Asp/Asn) ligase (607 aa).

Glutamate 176 provides a ligand contact to L-aspartate. The segment at 200-203 (QQFK) is aspartate. 2 residues coordinate L-aspartate: arginine 222 and histidine 456. 222-224 (RDE) contacts ATP. Position 496 (glutamate 496) interacts with ATP. Position 503 (arginine 503) interacts with L-aspartate. An ATP-binding site is contributed by 548–551 (GIDR).

This sequence belongs to the class-II aminoacyl-tRNA synthetase family. Type 1 subfamily. As to quaternary structure, homodimer.

Its subcellular location is the cytoplasm. It catalyses the reaction tRNA(Asx) + L-aspartate + ATP = L-aspartyl-tRNA(Asx) + AMP + diphosphate. Aspartyl-tRNA synthetase with relaxed tRNA specificity since it is able to aspartylate not only its cognate tRNA(Asp) but also tRNA(Asn). Reaction proceeds in two steps: L-aspartate is first activated by ATP to form Asp-AMP and then transferred to the acceptor end of tRNA(Asp/Asn). This chain is Aspartate--tRNA(Asp/Asn) ligase, found in Parvibaculum lavamentivorans (strain DS-1 / DSM 13023 / NCIMB 13966).